The chain runs to 388 residues: Trichodiene synthase (388 aa).

Mg(2+)-binding residues include D109, E173, N234, S238, E242, and D248. Positions 109-113 (DDSRE) are aspartate-rich domain.

The protein belongs to the trichodiene synthase family. Mg(2+) is required as a cofactor. The cofactor is Mn(2+).

The catalysed reaction is (2E,6E)-farnesyl diphosphate = trichodiene + diphosphate. It participates in sesquiterpene biosynthesis; trichothecene biosynthesis. Functionally, trichodiene synthase; part of the gene cluster that mediates the production of the antimicrobial trichothecene harzianum A (HA) that plays a role in Botrytis cinerea antagonistic activity and plant defense priming. The biosynthesis of harzianum A begins with the cyclization of farnesyl diphosphate to trichodiene and is catalyzed by the trichodiene synthase TRI5. Trichodiene undergoes a series of oxygenations catalyzed by the cytochrome P450 monooxygenase TRI4. TRI4 controls the addition of 3 oxygens at C-2, C-11, and the C-12, C-13-epoxide to form the intermediate isotrichodiol. Isotrichodiol then undergoes a non-enzymatic isomerization and cyclization to form 12,13-epoxytrichothec-9-ene (EPT) which is further converted to trichodermol by the cytochrome P450 monooxygenase TRI11 via C-4 hydroxylation. The last step of HA synthesis is esterification of an octatriendioyl moiety to the C-4 oxygen of trichodermol. The octatriendioyl moiety is probably produced by the polyketide synthase TRI17 and the esterification performed by the trichothecene O-acetyltransferase TRI3. This chain is Trichodiene synthase, found in Trichoderma arundinaceum.